We begin with the raw amino-acid sequence, 257 residues long: Acetylglutamate kinase (257 aa).

Substrate is bound by residues 43–44, arginine 65, and asparagine 157; that span reads GG. ATP contacts are provided by residues 180–185 and 208–210; these read DISGIL and IIT.

The protein belongs to the acetylglutamate kinase family. ArgB subfamily. In terms of assembly, homodimer.

The protein resides in the cytoplasm. The catalysed reaction is N-acetyl-L-glutamate + ATP = N-acetyl-L-glutamyl 5-phosphate + ADP. It participates in amino-acid biosynthesis; L-arginine biosynthesis; N(2)-acetyl-L-ornithine from L-glutamate: step 2/4. Catalyzes the ATP-dependent phosphorylation of N-acetyl-L-glutamate. The polypeptide is Acetylglutamate kinase (Sodalis glossinidius (strain morsitans)).